The chain runs to 120 residues: Synaptobrevin (120 aa).

Positions 1–38 (MSAPPSGPAPDAQGGAPGQPTGPPGAPPNTTSNRRLQQ) are disordered. Topologically, residues 1–98 (MSAPPSGPAP…KRKYWWKNCK (98 aa)) are cytoplasmic. Positions 29-38 (NTTSNRRLQQ) are enriched in polar residues. The v-SNARE coiled-coil homology domain occupies 35–95 (RLQQTQAQVE…AKLKRKYWWK (61 aa)). The helical; Anchor for type IV membrane protein transmembrane segment at 99–118 (MMIMLGGIGAIIVIVIIIYF) threads the bilayer. The Vesicular portion of the chain corresponds to 119 to 120 (FT).

The protein belongs to the synaptobrevin family. Nervous system specific.

The protein localises to the cytoplasmic vesicle. The protein resides in the secretory vesicle. It localises to the synaptic vesicle membrane. It is found in the synapse. Its subcellular location is the synaptosome. Its function is as follows. This protein may play a role in packaging, transport or release of neurotransmitters. The polypeptide is Synaptobrevin (Tetronarce californica (Pacific electric ray)).